Reading from the N-terminus, the 464-residue chain is MSALKIYNTLAREKQPFTPIEPGKVRMYVCGMTVYDYCHIGHARVMVVFDLVQRWLRASGYEVNYVRNITDIDDKIIKRAAENGESISALTQRFIDAMDEDAAALGVQKPDHEPRATNYVPQMLGLIEALERNGLAYKSSDGDVNYSVRDFPGYGKLSGKSLDDLRAGERVDVNTGKRDPLDFVLWKSSKEAEPDEVKWASKWGSGRPGWHIECSAMACELLGQQFDIHGGGADLQFPHHENEIAQSEGASQHTFVNYWMHNGFVRVDNEKMSKSLGNFFTIREVLAKYDSEVVRFFILRAHYRSQLNYSDAHLDDARNALTRMYTALKGVAPDQAALDMTEAHALRFAEAMNDDFNTPLAVAVLFELANEINKTKSPALARQLVGLAGIVGLLQRPAQQFLHAGLANGEDGEMETFVVEQIEARVNAKKAKNFAEADRIRAELLEKGIILEDKPGGLTEWRRA.

Residue Cys-30 coordinates Zn(2+). A 'HIGH' region motif is present at residues 32–42 (MTVYDYCHIGH). Residues Cys-214, His-239, and Glu-243 each contribute to the Zn(2+) site. A 'KMSKS' region motif is present at residues 271–275 (KMSKS). ATP is bound at residue Lys-274.

This sequence belongs to the class-I aminoacyl-tRNA synthetase family. As to quaternary structure, monomer. The cofactor is Zn(2+).

The protein resides in the cytoplasm. The enzyme catalyses tRNA(Cys) + L-cysteine + ATP = L-cysteinyl-tRNA(Cys) + AMP + diphosphate. The polypeptide is Cysteine--tRNA ligase (Janthinobacterium sp. (strain Marseille) (Minibacterium massiliensis)).